The primary structure comprises 157 residues: Succinate dehydrogenase assembly factor 2-A, mitochondrial (157 aa).

This sequence belongs to the SDHAF2 family. In terms of assembly, interacts with the flavoprotein subunit within the SDH catalytic dimer.

Its subcellular location is the mitochondrion matrix. Plays an essential role in the assembly of succinate dehydrogenase (SDH), an enzyme complex (also referred to as respiratory complex II) that is a component of both the tricarboxylic acid (TCA) cycle and the mitochondrial electron transport chain, and which couples the oxidation of succinate to fumarate with the reduction of ubiquinone (coenzyme Q) to ubiquinol. Required for flavinylation (covalent attachment of FAD) of the flavoprotein subunit of the SDH catalytic dimer. This Drosophila willistoni (Fruit fly) protein is Succinate dehydrogenase assembly factor 2-A, mitochondrial.